A 312-amino-acid polypeptide reads, in one-letter code: Ribosomal protein L11 methyltransferase (312 aa).

4 residues coordinate S-adenosyl-L-methionine: threonine 160, glycine 181, aspartate 203, and asparagine 246.

It belongs to the methyltransferase superfamily. PrmA family.

It localises to the cytoplasm. The catalysed reaction is L-lysyl-[protein] + 3 S-adenosyl-L-methionine = N(6),N(6),N(6)-trimethyl-L-lysyl-[protein] + 3 S-adenosyl-L-homocysteine + 3 H(+). Methylates ribosomal protein L11. The chain is Ribosomal protein L11 methyltransferase from Staphylococcus haemolyticus (strain JCSC1435).